A 463-amino-acid polypeptide reads, in one-letter code: Argininosuccinate lyase (463 aa).

This sequence belongs to the lyase 1 family. Argininosuccinate lyase subfamily.

The protein resides in the cytoplasm. It catalyses the reaction 2-(N(omega)-L-arginino)succinate = fumarate + L-arginine. Its pathway is amino-acid biosynthesis; L-arginine biosynthesis; L-arginine from L-ornithine and carbamoyl phosphate: step 3/3. The protein is Argininosuccinate lyase of Streptococcus pneumoniae (strain JJA).